The following is a 656-amino-acid chain: Anion exchange transporter (656 aa).

At 1 to 75 (MTGAKRKKKS…LAFAVLSSVH (75 aa)) the chain is on the cytoplasmic side. Residues 76–96 (PVFGLYGSLFPAIIYAIFGMG) traverse the membrane as a helical segment. The Extracellular segment spans residues 97 to 144 (HHVATGTFALTSLISANAVERIVPQNMQNLTTQSNTSVLGLSDFEMQR). A helical transmembrane segment spans residues 145-165 (IHVAAAVSFLGGVIQVAMFVL). Position 166 (Q166) is a topological domain, cytoplasmic. A helical membrane pass occupies residues 167–187 (LGSATFVVTEPVISAMTTGAA). At 188–202 (THVVTSQVKYLLGMK) the chain is on the extracellular side. The chain crosses the membrane as a helical span at residues 203–223 (MPYISGPLGFFYIYAYVFENI). At 224 to 227 (KSVR) the chain is on the cytoplasmic side. A helical transmembrane segment spans residues 228 to 248 (LEALLLSLLSIVVLVLVKELN). Residues 249–254 (EQFKRK) are Extracellular-facing. A helical membrane pass occupies residues 255 to 275 (IKVVLPVDLVLIIAASFACYC). Over 276–306 (TNMENTYGLEVVGHIPQGIPSPRAPPMNILS) the chain is Cytoplasmic. The helical transmembrane segment at 307–327 (AVITEAFGVALVGYVASLALA) threads the bilayer. At 328–343 (QGSAKKFKYSIDDNQE) the chain is on the extracellular side. The helical transmembrane segment at 344–364 (FLAHGLSNIVSSFFFCIPSAA) threads the bilayer. The Cytoplasmic portion of the chain corresponds to 365-383 (AMGRTAGLYSTGAKTQVAC). 2 helical membrane passes run 384–404 (LISC…LYWL) and 405–425 (PMCV…IQFR). At 426–448 (DLKKYWNVDKIDWGIWVSTYVFT) the chain is on the extracellular side. A helical transmembrane segment spans residues 449–469 (ICFAANVGLLFGVVCTIAIVI). Residues 470 to 656 (GRFPRAMTVS…LSKLSDHSEV (187 aa)) lie on the Cytoplasmic side of the membrane. The STAS domain maps to 492–641 (TEMDSETLQQ…ESVSAAISHI (150 aa)). The membrane targeting stretch occupies residues 641 to 656 (IHSNKNLSKLSDHSEV).

It belongs to the SLC26A/SulP transporter (TC 2.A.53) family. Expressed in the thyroid gland (at protein level). Expressed in tonsillar high endothelial venule endothelial cells (HEVEC), placenta and in testis, expressed in a subgroup of basal cells in the epididymal ducts.

It is found in the basolateral cell membrane. The protein resides in the recycling endosome membrane. The protein localises to the apical cell membrane. It localises to the lateral cell membrane. It catalyses the reaction chloride(in) = chloride(out). It carries out the reaction iodide(out) = iodide(in). The catalysed reaction is bromide(in) = bromide(out). The enzyme catalyses oxalate(in) = oxalate(out). It catalyses the reaction nitrate(in) = nitrate(out). It carries out the reaction sulfate(in) = sulfate(out). The catalysed reaction is thiocyanate(in) = thiocyanate(out). The enzyme catalyses D-gluconate(in) = D-gluconate(out). It catalyses the reaction hydrogencarbonate(in) = hydrogencarbonate(out). It carries out the reaction hydrogencarbonate(in) + chloride(out) = hydrogencarbonate(out) + chloride(in). Is active at both alkaline and acidic pH. Activity is inhibited by 4,4'-Di-isothiocyanatostilbene-2,2'-disulfonic acid (DIDS - an inhibitor of several anion channels and transporters). In terms of biological role, acts as an anion channel mediating the transport of chloride, sulfate and oxalate ions. Mediates the transport of bromide, iodide, nitrate, gluconate, thiocyanate and bicarbonate ions. Its permeability towards bicarbonate is weak and increases when pH is above 7. Mediates thiocyanate transport in retinal pigment epithelium cells. Mediates iodide transport in the thyroid gland, playing an important role in the synthesis of thyroid hormones and the maintenance of thyroid function. Although it is an anion channel, according to PubMed:12736153 and PubMed:32119864 it has been shown to exhibit chloride-bicarbonate exchanger activity. This chain is Anion exchange transporter, found in Homo sapiens (Human).